The sequence spans 134 residues: Aspartate 1-decarboxylase (134 aa).

The Schiff-base intermediate with substrate; via pyruvic acid role is filled by S25. S25 is subject to Pyruvic acid (Ser). Residue T57 coordinates substrate. The active-site Proton donor is the Y58. 73-75 (GAA) is a binding site for substrate.

The protein belongs to the PanD family. Heterooctamer of four alpha and four beta subunits. It depends on pyruvate as a cofactor. In terms of processing, is synthesized initially as an inactive proenzyme, which is activated by self-cleavage at a specific serine bond to produce a beta-subunit with a hydroxyl group at its C-terminus and an alpha-subunit with a pyruvoyl group at its N-terminus.

The protein resides in the cytoplasm. It carries out the reaction L-aspartate + H(+) = beta-alanine + CO2. It participates in cofactor biosynthesis; (R)-pantothenate biosynthesis; beta-alanine from L-aspartate: step 1/1. Functionally, catalyzes the pyruvoyl-dependent decarboxylation of aspartate to produce beta-alanine. The protein is Aspartate 1-decarboxylase of Mycolicibacterium gilvum (strain PYR-GCK) (Mycobacterium gilvum (strain PYR-GCK)).